A 209-amino-acid chain; its full sequence is Pyroglutamyl-peptidase 1 (209 aa).

Active-site residues include glutamate 85, cysteine 149, and histidine 168.

The protein belongs to the peptidase C15 family. Monomer.

It localises to the cytoplasm. The catalysed reaction is Release of an N-terminal pyroglutamyl group from a polypeptide, the second amino acid generally not being Pro.. Removes 5-oxoproline from various penultimate amino acid residues except L-proline. This Mus musculus (Mouse) protein is Pyroglutamyl-peptidase 1 (Pgpep1).